The sequence spans 83 residues: Exodeoxyribonuclease 7 small subunit (83 aa).

This sequence belongs to the XseB family. As to quaternary structure, heterooligomer composed of large and small subunits.

The protein localises to the cytoplasm. It catalyses the reaction Exonucleolytic cleavage in either 5'- to 3'- or 3'- to 5'-direction to yield nucleoside 5'-phosphates.. Functionally, bidirectionally degrades single-stranded DNA into large acid-insoluble oligonucleotides, which are then degraded further into small acid-soluble oligonucleotides. In Rhodopseudomonas palustris (strain HaA2), this protein is Exodeoxyribonuclease 7 small subunit.